Reading from the N-terminus, the 178-residue chain is NAD(P)H-quinone oxidoreductase subunit 6, chloroplastic (178 aa).

Helical transmembrane passes span 10–30, 32–52, 61–81, 94–114, and 154–174; these read FILVFLGSGLILGGLGVVLFT, PIYSAFSLGLVLVCISLFYIL, AQLLIYVGAVNVLIIFAVMFM, LWTIGDGLTSLVCTSIFFSLI, and FFLPFELVSIILLVALIGAIA.

It belongs to the complex I subunit 6 family. As to quaternary structure, NDH is composed of at least 16 different subunits, 5 of which are encoded in the nucleus.

Its subcellular location is the plastid. The protein localises to the chloroplast thylakoid membrane. The catalysed reaction is a plastoquinone + NADH + (n+1) H(+)(in) = a plastoquinol + NAD(+) + n H(+)(out). It carries out the reaction a plastoquinone + NADPH + (n+1) H(+)(in) = a plastoquinol + NADP(+) + n H(+)(out). In terms of biological role, NDH shuttles electrons from NAD(P)H:plastoquinone, via FMN and iron-sulfur (Fe-S) centers, to quinones in the photosynthetic chain and possibly in a chloroplast respiratory chain. The immediate electron acceptor for the enzyme in this species is believed to be plastoquinone. Couples the redox reaction to proton translocation, and thus conserves the redox energy in a proton gradient. The protein is NAD(P)H-quinone oxidoreductase subunit 6, chloroplastic (ndhG) of Citrus sinensis (Sweet orange).